Here is a 149-residue protein sequence, read N- to C-terminus: HTH-type transcriptional regulator LrpB (149 aa).

The 62-residue stretch at I3–S64 folds into the HTH asnC-type domain. The H-T-H motif DNA-binding region spans W22–K41.

Its function is as follows. Negative regulation of glyA transcription and kinB-dependent sporulation. The chain is HTH-type transcriptional regulator LrpB (lrpB) from Bacillus subtilis (strain 168).